The following is an 889-amino-acid chain: Oxysterol-binding protein-related protein 8 (889 aa).

Position 1 is an N-acetylmethionine (Met1). The disordered stretch occupies residues 1–129 (MEGGLADGEP…SLKVQKKNYR (129 aa)). Ser14 is subject to Phosphoserine. Composition is skewed to polar residues over residues 28 to 46 (VVAN…MSQR) and 62 to 71 (PSLSPASPHS). A phosphoserine mark is found at Ser65 and Ser68. 3 stretches are compositionally biased toward basic and acidic residues: residues 73–88 (GFER…KDES), 95–109 (SKSE…EKDS), and 116–129 (TKKE…KNYR). The PH domain maps to 148–265 (VIVMADWLKI…WMDALELALK (118 aa)). Phosphoserine is present on residues Ser314, Ser328, and Ser342. Residues 322–336 (KDQDMYSDKSDKEND) show a composition bias toward basic and acidic residues. The disordered stretch occupies residues 322-399 (KDQDMYSDKS…AGEASQTETV (78 aa)). Residues 346–363 (VMGKSEESDTDTSERQDD) are compositionally biased toward basic and acidic residues. A 1,2-diacyl-sn-glycero-3-phospho-(1D-myo-inositol 4-phosphate) is bound by residues 420 to 425 (LSKVVL), 482 to 485 (KPYN), and 514 to 515 (HH). Residues 420 to 425 (LSKVVL) and Asn485 contribute to the a 1,2-diacyl-sn-glycero-3-phospho-L-serine site. Ser540 serves as a coordination point for a 1,2-diacyl-sn-glycero-3-phospho-L-serine. The a 1,2-diacyl-sn-glycero-3-phospho-(1D-myo-inositol 4-phosphate) site is built by Lys706, Glu710, and Arg714. The tract at residues 771–823 (KHRTPMVSVPKMKHKPTRQQKKVAKGYSSPEPDIQDSSGSEAQSVKPSTRRKK) is disordered. Basic residues predominate over residues 781–794 (KMKHKPTRQQKKVA). Residues 805-817 (QDSSGSEAQSVKP) are compositionally biased toward polar residues. Phosphoserine is present on residues Ser807, Ser808, Ser810, and Ser814. Residues 871-888 (YFIIFLLILLQVIINFMF) form a helical membrane-spanning segment.

The protein belongs to the OSBP family. In terms of assembly, interacts with SPAG5. Interacts with NUP62. As to expression, widely expressed. Expressed at higher level in macrophages.

It localises to the endoplasmic reticulum membrane. The protein resides in the nucleus membrane. Lipid transporter involved in lipid countertransport between the endoplasmic reticulum and the plasma membrane: specifically exchanges phosphatidylserine with phosphatidylinositol 4-phosphate (PI4P), delivering phosphatidylserine to the plasma membrane in exchange for PI4P, which is degraded by the SAC1/SACM1L phosphatase in the endoplasmic reticulum. Binds phosphatidylserine and PI4P in a mutually exclusive manner. Binds oxysterol, 25-hydroxycholesterol and cholesterol. This is Oxysterol-binding protein-related protein 8 (OSBPL8) from Homo sapiens (Human).